The primary structure comprises 364 residues: Spermidine/putrescine import ATP-binding protein PotA (364 aa).

The ABC transporter domain maps to 5-235 (LSLKSVSKSY…PVNRFVADFI (231 aa)). 37–44 (GPSGCGKT) lines the ATP pocket.

Belongs to the ABC transporter superfamily. Spermidine/putrescine importer (TC 3.A.1.11.1) family. The complex is composed of two ATP-binding proteins (PotA), two transmembrane proteins (PotB and PotC) and a solute-binding protein (PotD).

Its subcellular location is the cell membrane. It catalyses the reaction ATP + H2O + polyamine-[polyamine-binding protein]Side 1 = ADP + phosphate + polyamineSide 2 + [polyamine-binding protein]Side 1.. Part of the ABC transporter complex PotABCD involved in spermidine/putrescine import. Responsible for energy coupling to the transport system. The polypeptide is Spermidine/putrescine import ATP-binding protein PotA (Staphylococcus aureus (strain USA300)).